Here is a 254-residue protein sequence, read N- to C-terminus: UPF0246 protein FTW_0267 (254 aa).

The protein belongs to the UPF0246 family.

The polypeptide is UPF0246 protein FTW_0267 (Francisella tularensis subsp. tularensis (strain WY96-3418)).